The primary structure comprises 158 residues: uncharacterized protein (158 aa).

An N-terminal signal peptide occupies residues 1 to 22; sequence MKKIPNKLLAVSAFLTITTTYA. A helical transmembrane segment spans residues 120 to 140; sequence LTGIIEYDTKFENHYETLVEA.

Its subcellular location is the cell membrane. This is an uncharacterized protein from Bacillus cereus.